We begin with the raw amino-acid sequence, 109 residues long: Small ribosomal subunit protein bS18c (109 aa).

Residues 82-109 (GFERSESTPRTNALKPRNKNKQNNQTQF) form a disordered region.

Belongs to the bacterial ribosomal protein bS18 family. In terms of assembly, part of the 30S ribosomal subunit.

Its subcellular location is the plastid. The sequence is that of Small ribosomal subunit protein bS18c from Cuscuta reflexa (Southern Asian dodder).